Reading from the N-terminus, the 360-residue chain is MSELQEVQITEDNPLLQDPLKAAELAAKLLQVQEQKHSIETPYGVVTVTIQGTPKPKRPAIVTFHDVGMDHKMCFDTLFKYEDMCEIVKNFVVCHIDAPGQEEGSAVYPPGYQYPSLDQLAETIPCVLQYLNFPSIIGIGVGAGAYIFAKYTLSHANTVEGLVLINIDPNAKGWMDWAAQKLTGLTQSISDMMLGHLFSAEELSGNSDVVRQYKASILNSPLISNYQLYWNSYNSRRDLNLERGGGVTLKCPVMLVVGDQAPHEDAVVECNSKLDPTQTSFLKMADSGGQPQITQPGKLTEAFKYFVQGMGYMASSCMTRLSRSRTASLSSEGNRSRSRTLSQSSESGGGPPAPLAEVTC.

A disordered region spans residues 325 to 360; sequence RTASLSSEGNRSRSRTLSQSSESGGGPPAPLAEVTC.

This sequence belongs to the NDRG family.

The protein resides in the cytoplasm. Contributes to the regulation of the Wnt signaling pathway. Down-regulates CTNNB1-mediated transcriptional activation of target genes. May be involved in neuron differentiation. In Xenopus tropicalis (Western clawed frog), this protein is Protein NDRG2.